The primary structure comprises 1356 residues: Fibronectin type III domain containing protein 3C1 (1356 aa).

3 disordered regions span residues 303 to 341, 356 to 402, and 428 to 452; these read PRNM…SDNN, TYDE…SDVA, and NQKK…QPGC. Low complexity predominate over residues 308 to 341; it reads DNIPDTNTTDTITSSSAHTPSISTSNATFCSDNN. Positions 370–393 are enriched in polar residues; that stretch reads PSCTSQSASNPSVSENAHNPSSIN. Positions 439-448 are enriched in basic and acidic residues; that stretch reads LKEHNTEDRT. Fibronectin type-III domains are found at residues 454–549, 553–648, 650–741, and 745–842; these read NIEK…TPGC, PPLA…TPPA, LPPK…TRPA, and CPNK…TLPP. Over residues 825–838 the composition is skewed to polar residues; it reads GQSRPSDVLTIQTP. The segment at 825–894 is disordered; sequence GQSRPSDVLT…QDRKVHPSSE (70 aa). The span at 883-894 shows a compositional bias: basic and acidic residues; the sequence is PHQDRKVHPSSE. 4 consecutive Fibronectin type-III domains span residues 914–1007, 1017–1103, 1104–1199, and 1202–1299; these read PPSQ…TPGT, EVES…TKPL, PPEP…TKSP, and ALKA…TYKH. The segment at 1299–1320 is disordered; the sequence is HHSGHGKGSGSKGKGNHNDKGE. The helical transmembrane segment at 1330–1350 threads the bilayer; it reads TFVLTLLIGFALIAVLCAVAV. The Cytoplasmic portion of the chain corresponds to 1351 to 1356; it reads QYLLIN.

It belongs to the FNDC3 family.

Its subcellular location is the membrane. This Mus musculus (Mouse) protein is Fibronectin type III domain containing protein 3C1 (Fndc3c1).